Reading from the N-terminus, the 39-residue chain is Gas vesicle protein C (39 aa).

Belongs to the gas vesicle GvpC family.

It is found in the gas vesicle. Its function is as follows. Confers stability, involved in shaping gas vesicles, hollow, gas filled proteinaceous nanostructures. During planktonic growth they allow positioning of the organism at a favorable depth for light or nutrient acquisition. In Spirulina sp. (strain CCAP 1475/10), this protein is Gas vesicle protein C.